The sequence spans 392 residues: Small ribosomal subunit protein uS9m (392 aa).

Positions 8 to 25 (RSSRAMSSASPASASDSD) are enriched in low complexity. The tract at residues 8–27 (RSSRAMSSASPASASDSDTS) is disordered.

The protein belongs to the universal ribosomal protein uS9 family. As to quaternary structure, component of the mitochondrial ribosome small subunit (28S) which comprises a 12S rRNA and about 30 distinct proteins.

It is found in the mitochondrion. This chain is Small ribosomal subunit protein uS9m (mrps-9), found in Caenorhabditis elegans.